An 85-amino-acid polypeptide reads, in one-letter code: Protein MANBAL (85 aa).

The helical transmembrane segment at 24–44 threads the bilayer; that stretch reads YGLFLGAIFQLICVLAIIVPI. Positions 49-64 are enriched in basic and acidic residues; sequence EAEAEQAEPRSAEGPK. The disordered stretch occupies residues 49-85; sequence EAEAEQAEPRSAEGPKKPKAAIASTNKRPKKETKKKR. Residues 75 to 85 are compositionally biased toward basic residues; the sequence is KRPKKETKKKR.

The protein belongs to the UPF0239 family.

It localises to the membrane. In Mus musculus (Mouse), this protein is Protein MANBAL (Manbal).